The primary structure comprises 229 residues: Potassium/proton antiporter CemA (229 aa).

The next 4 membrane-spanning stretches (helical) occupy residues 7–27 (FTPL…SLSF), 114–134 (LICF…LLIL), 154–174 (ILLL…ELMI), and 189–209 (IISG…KYWI).

This sequence belongs to the CemA family.

It is found in the plastid. It localises to the chloroplast inner membrane. The enzyme catalyses K(+)(in) + H(+)(out) = K(+)(out) + H(+)(in). In terms of biological role, contributes to K(+)/H(+) antiport activity by supporting proton efflux to control proton extrusion and homeostasis in chloroplasts in a light-dependent manner to modulate photosynthesis. Prevents excessive induction of non-photochemical quenching (NPQ) under continuous-light conditions. Indirectly promotes efficient inorganic carbon uptake into chloroplasts. The protein is Potassium/proton antiporter CemA of Gossypium hirsutum (Upland cotton).